The primary structure comprises 150 residues: Aspartate 1-decarboxylase (150 aa).

Ser24 acts as the Schiff-base intermediate with substrate; via pyruvic acid in catalysis. Ser24 carries the post-translational modification Pyruvic acid (Ser). Thr56 is a substrate binding site. Tyr57 serves as the catalytic Proton donor. 72 to 74 (GAA) is a substrate binding site.

It belongs to the PanD family. As to quaternary structure, heterooctamer of four alpha and four beta subunits. Requires pyruvate as cofactor. In terms of processing, is synthesized initially as an inactive proenzyme, which is activated by self-cleavage at a specific serine bond to produce a beta-subunit with a hydroxyl group at its C-terminus and an alpha-subunit with a pyruvoyl group at its N-terminus.

It localises to the cytoplasm. It carries out the reaction L-aspartate + H(+) = beta-alanine + CO2. Its pathway is cofactor biosynthesis; (R)-pantothenate biosynthesis; beta-alanine from L-aspartate: step 1/1. Its function is as follows. Catalyzes the pyruvoyl-dependent decarboxylation of aspartate to produce beta-alanine. The sequence is that of Aspartate 1-decarboxylase from Xanthobacter autotrophicus (strain ATCC BAA-1158 / Py2).